Reading from the N-terminus, the 713-residue chain is Phosphoribosylformylglycinamidine synthase subunit PurL (713 aa).

Histidine 34 is a catalytic residue. Residues tyrosine 37 and arginine 73 each contribute to the ATP site. Position 75 (glutamate 75) interacts with Mg(2+). Residues serine 76–histidine 79 and arginine 98 contribute to the substrate site. Catalysis depends on histidine 77, which acts as the Proton acceptor. Residue aspartate 99 coordinates Mg(2+). Glutamine 221 serves as a coordination point for substrate. Aspartate 249 lines the Mg(2+) pocket. Glutamate 292–glutamine 294 lines the substrate pocket. Residues aspartate 474 and glycine 511 each coordinate ATP. Serine 514 serves as a coordination point for substrate.

Belongs to the FGAMS family. Monomer. Part of the FGAM synthase complex composed of 1 PurL, 1 PurQ and 2 PurS subunits.

It localises to the cytoplasm. The enzyme catalyses N(2)-formyl-N(1)-(5-phospho-beta-D-ribosyl)glycinamide + L-glutamine + ATP + H2O = 2-formamido-N(1)-(5-O-phospho-beta-D-ribosyl)acetamidine + L-glutamate + ADP + phosphate + H(+). The protein operates within purine metabolism; IMP biosynthesis via de novo pathway; 5-amino-1-(5-phospho-D-ribosyl)imidazole from N(2)-formyl-N(1)-(5-phospho-D-ribosyl)glycinamide: step 1/2. Functionally, part of the phosphoribosylformylglycinamidine synthase complex involved in the purines biosynthetic pathway. Catalyzes the ATP-dependent conversion of formylglycinamide ribonucleotide (FGAR) and glutamine to yield formylglycinamidine ribonucleotide (FGAM) and glutamate. The FGAM synthase complex is composed of three subunits. PurQ produces an ammonia molecule by converting glutamine to glutamate. PurL transfers the ammonia molecule to FGAR to form FGAM in an ATP-dependent manner. PurS interacts with PurQ and PurL and is thought to assist in the transfer of the ammonia molecule from PurQ to PurL. The chain is Phosphoribosylformylglycinamidine synthase subunit PurL from Ignicoccus hospitalis (strain KIN4/I / DSM 18386 / JCM 14125).